The primary structure comprises 348 residues: Methylthioribose-1-phosphate isomerase (348 aa).

Substrate contacts are provided by residues 46–48 (RGA), Arg-88, and Gln-194. The active-site Proton donor is the Asp-235. 245-246 (NK) is a binding site for substrate.

This sequence belongs to the eIF-2B alpha/beta/delta subunits family. MtnA subfamily.

It catalyses the reaction 5-(methylsulfanyl)-alpha-D-ribose 1-phosphate = 5-(methylsulfanyl)-D-ribulose 1-phosphate. It participates in amino-acid biosynthesis; L-methionine biosynthesis via salvage pathway; L-methionine from S-methyl-5-thio-alpha-D-ribose 1-phosphate: step 1/6. Its function is as follows. Catalyzes the interconversion of methylthioribose-1-phosphate (MTR-1-P) into methylthioribulose-1-phosphate (MTRu-1-P). The protein is Methylthioribose-1-phosphate isomerase of Desulforudis audaxviator (strain MP104C).